A 312-amino-acid polypeptide reads, in one-letter code: Probable deoxyhypusine synthase (312 aa).

Lys285 functions as the Nucleophile in the catalytic mechanism.

Belongs to the deoxyhypusine synthase family. NAD(+) is required as a cofactor.

The catalysed reaction is [eIF5A protein]-L-lysine + spermidine = [eIF5A protein]-deoxyhypusine + propane-1,3-diamine. It functions in the pathway protein modification; eIF5A hypusination. Functionally, catalyzes the NAD-dependent oxidative cleavage of spermidine and the subsequent transfer of the butylamine moiety of spermidine to the epsilon-amino group of a specific lysine residue of the eIF-5A precursor protein to form the intermediate deoxyhypusine residue. This chain is Probable deoxyhypusine synthase, found in Saccharolobus islandicus (strain Y.N.15.51 / Yellowstone #2) (Sulfolobus islandicus).